The primary structure comprises 495 residues: Glutamyl-tRNA(Gln) amidotransferase subunit A (495 aa).

Active-site charge relay system residues include K79 and S159. Residue S183 is the Acyl-ester intermediate of the active site.

This sequence belongs to the amidase family. GatA subfamily. Heterotrimer of A, B and C subunits.

It carries out the reaction L-glutamyl-tRNA(Gln) + L-glutamine + ATP + H2O = L-glutaminyl-tRNA(Gln) + L-glutamate + ADP + phosphate + H(+). Its function is as follows. Allows the formation of correctly charged Gln-tRNA(Gln) through the transamidation of misacylated Glu-tRNA(Gln) in organisms which lack glutaminyl-tRNA synthetase. The reaction takes place in the presence of glutamine and ATP through an activated gamma-phospho-Glu-tRNA(Gln). The protein is Glutamyl-tRNA(Gln) amidotransferase subunit A of Gluconobacter oxydans (strain 621H) (Gluconobacter suboxydans).